We begin with the raw amino-acid sequence, 605 residues long: uncharacterized protein (605 aa).

Residues 111-151 are disordered; it reads VNVNDGKPNDIELSSTSKTENDPPLSLHTTPDDLQGNGVNV.

The protein localises to the golgi apparatus. This is an uncharacterized protein from Schizosaccharomyces pombe (strain 972 / ATCC 24843) (Fission yeast).